The chain runs to 215 residues: Phosphatidylserine decarboxylase proenzyme (215 aa).

Ser-184 functions as the Schiff-base intermediate with substrate; via pyruvic acid in the catalytic mechanism. Position 184 is a pyruvic acid (Ser); by autocatalysis (Ser-184).

Belongs to the phosphatidylserine decarboxylase family. PSD-A subfamily. Heterodimer of a large membrane-associated beta subunit and a small pyruvoyl-containing alpha subunit. The cofactor is pyruvate. Is synthesized initially as an inactive proenzyme. Formation of the active enzyme involves a self-maturation process in which the active site pyruvoyl group is generated from an internal serine residue via an autocatalytic post-translational modification. Two non-identical subunits are generated from the proenzyme in this reaction, and the pyruvate is formed at the N-terminus of the alpha chain, which is derived from the carboxyl end of the proenzyme. The post-translation cleavage follows an unusual pathway, termed non-hydrolytic serinolysis, in which the side chain hydroxyl group of the serine supplies its oxygen atom to form the C-terminus of the beta chain, while the remainder of the serine residue undergoes an oxidative deamination to produce ammonia and the pyruvoyl prosthetic group on the alpha chain.

It localises to the cell membrane. The enzyme catalyses a 1,2-diacyl-sn-glycero-3-phospho-L-serine + H(+) = a 1,2-diacyl-sn-glycero-3-phosphoethanolamine + CO2. The protein operates within phospholipid metabolism; phosphatidylethanolamine biosynthesis; phosphatidylethanolamine from CDP-diacylglycerol: step 2/2. Catalyzes the formation of phosphatidylethanolamine (PtdEtn) from phosphatidylserine (PtdSer). This is Phosphatidylserine decarboxylase proenzyme from Ralstonia pickettii (strain 12J).